The primary structure comprises 73 residues: uncharacterized protein (73 aa).

This is an uncharacterized protein from Invertebrate iridescent virus 6 (IIV-6).